The sequence spans 249 residues: MTHSVVELIEIESAIIQVKMQDRTHKNAFSQELTDDLIQAFEYIRQNPKYKAVILTGYDNYFASGGTQEGLLRIQQGLTKFTDDNLYSLALDCEIPVIAAMQGHGIGGGFVMGLFADIVILSRESVYTANFMKYGFTPGMGATFIVPKKLGFSLAQEILLNAGSYRGADLEKRGVPFKVLPRAEVLDYAVELAQELAEKPRNSLVTLKDHLVAPLRDQLPRVIEQELMMHEKTFHHEEVKSRIKGLYGN.

The active site involves histidine 230.

It belongs to the enoyl-CoA hydratase/isomerase family. As to quaternary structure, homotrimer. Does not form a heterotrimeric complex with PksH.

Its subcellular location is the cytoplasm. It functions in the pathway antibiotic biosynthesis; bacillaene biosynthesis. Its function is as follows. Involved in some intermediate steps for the synthesis of the antibiotic polyketide bacillaene which is involved in secondary metabolism. Catalyzes the decarboxylation of the 3-methylglutaconyl group tethered to PksL to a 3-methylcrotonyl moiety. The sequence is that of Bacillaene synthase decarboxylase PksI (pksI) from Bacillus subtilis (strain 168).